The primary structure comprises 1206 residues: DNA-directed RNA polymerase subunit beta' (1206 aa).

4 residues coordinate Zn(2+): C60, C62, C75, and C78. 3 residues coordinate Mg(2+): D449, D451, and D453. Residues C818, C892, C899, and C902 each contribute to the Zn(2+) site.

This sequence belongs to the RNA polymerase beta' chain family. In terms of assembly, the RNAP catalytic core consists of 2 alpha, 1 beta, 1 beta' and 1 omega subunit. When a sigma factor is associated with the core the holoenzyme is formed, which can initiate transcription. It depends on Mg(2+) as a cofactor. Zn(2+) serves as cofactor.

It carries out the reaction RNA(n) + a ribonucleoside 5'-triphosphate = RNA(n+1) + diphosphate. Its function is as follows. DNA-dependent RNA polymerase catalyzes the transcription of DNA into RNA using the four ribonucleoside triphosphates as substrates. The protein is DNA-directed RNA polymerase subunit beta' of Shouchella clausii (strain KSM-K16) (Alkalihalobacillus clausii).